The primary structure comprises 237 residues: Uridylate kinase (237 aa).

10-13 (KLSG) is a binding site for ATP. Gly51 is a binding site for UMP. Residues Gly52 and Arg56 each contribute to the ATP site. UMP is bound by residues Asp71 and 133 to 140 (TGNPCFTT). ATP-binding residues include Thr160, Tyr166, and Asp169.

Belongs to the UMP kinase family. As to quaternary structure, homohexamer.

The protein localises to the cytoplasm. It catalyses the reaction UMP + ATP = UDP + ADP. It functions in the pathway pyrimidine metabolism; CTP biosynthesis via de novo pathway; UDP from UMP (UMPK route): step 1/1. Inhibited by UTP. In terms of biological role, catalyzes the reversible phosphorylation of UMP to UDP. The chain is Uridylate kinase from Vesicomyosocius okutanii subsp. Calyptogena okutanii (strain HA).